Here is a 99-residue protein sequence, read N- to C-terminus: Protein translation factor SUI1 homolog (99 aa).

Belongs to the SUI1 family.

The protein is Protein translation factor SUI1 homolog of Pyrococcus horikoshii (strain ATCC 700860 / DSM 12428 / JCM 9974 / NBRC 100139 / OT-3).